We begin with the raw amino-acid sequence, 181 residues long: Isopentenyl-diphosphate Delta-isomerase (181 aa).

Mn(2+)-binding residues include His24 and His30. The Nudix hydrolase domain occupies 28 to 168 (LLHLAFSVLL…PDTFSVWFPT (141 aa)). Cys68 is a catalytic residue. Mn(2+) is bound at residue His70. Residue Glu88 participates in Mg(2+) binding. Mn(2+) contacts are provided by Glu117 and Glu119. The active site involves Glu119.

The protein belongs to the IPP isomerase type 1 family. Mg(2+) is required as a cofactor. Mn(2+) serves as cofactor.

Its subcellular location is the cytoplasm. It carries out the reaction isopentenyl diphosphate = dimethylallyl diphosphate. It participates in isoprenoid biosynthesis; dimethylallyl diphosphate biosynthesis; dimethylallyl diphosphate from isopentenyl diphosphate: step 1/1. In terms of biological role, catalyzes the 1,3-allylic rearrangement of the homoallylic substrate isopentenyl (IPP) to its highly electrophilic allylic isomer, dimethylallyl diphosphate (DMAPP). The chain is Isopentenyl-diphosphate Delta-isomerase from Aliivibrio fischeri (strain MJ11) (Vibrio fischeri).